The chain runs to 506 residues: Glutamate--tRNA ligase (506 aa).

Positions 9–19 (PSPTGFQHIGG) match the 'HIGH' region motif. The 'KMSKS' region motif lies at 251 to 255 (KLSKR). K254 is an ATP binding site.

The protein belongs to the class-I aminoacyl-tRNA synthetase family. Glutamate--tRNA ligase type 1 subfamily. As to quaternary structure, monomer.

The protein localises to the cytoplasm. The enzyme catalyses tRNA(Glu) + L-glutamate + ATP = L-glutamyl-tRNA(Glu) + AMP + diphosphate. Functionally, catalyzes the attachment of glutamate to tRNA(Glu) in a two-step reaction: glutamate is first activated by ATP to form Glu-AMP and then transferred to the acceptor end of tRNA(Glu). The chain is Glutamate--tRNA ligase from Treponema denticola (strain ATCC 35405 / DSM 14222 / CIP 103919 / JCM 8153 / KCTC 15104).